Here is a 566-residue protein sequence, read N- to C-terminus: KsdD-like steroid dehydrogenase MT0809 (566 aa).

23-54 (DAIVVGAGLAGLVAACELADRGLRVLILDQEN) contacts FAD.

This sequence belongs to the FAD-dependent oxidoreductase 2 family. It depends on FAD as a cofactor.

The protein operates within lipid metabolism; steroid biosynthesis. In terms of biological role, able to catalyze the elimination of the C-1 and C-2 hydrogen atoms of the A-ring from the polycyclic ring structure of 3-ketosteroids. The sequence is that of KsdD-like steroid dehydrogenase MT0809 from Mycobacterium tuberculosis (strain CDC 1551 / Oshkosh).